The primary structure comprises 313 residues: PDCD10 and GCKIII kinases-associated protein 1 (313 aa).

Positions R40–C89 are disordered. Phosphoserine is present on residues S60 and S64. Over residues S60–L73 the composition is skewed to polar residues. T104 bears the Phosphothreonine mark. A phosphoserine mark is found at S107, S237, and S240. Positions Y253–V286 are disordered. Over residues G269–V285 the composition is skewed to basic and acidic residues.

As to quaternary structure, interacts with KEAP1; this interaction prevents the ubiquitination of KEAP1 by TRIM25, thus protecting KEAP1 from degradation. Found in association with PDCD10 and members of the STE20 kinases, such as STK24, STK25 and STK26.

The protein resides in the cell membrane. Its function is as follows. Acts as a tumor suppressor. Acts as a tumor suppressor for colorectal cancer cell proliferation by targeting KEAP1/USP17/ELK1/CDK6 axis. The protein is PDCD10 and GCKIII kinases-associated protein 1 of Mus musculus (Mouse).